Reading from the N-terminus, the 317-residue chain is Protein phosphatase PTC7 homolog fig (317 aa).

The PPM-type phosphatase domain occupies Pro-46–Val-312. 3 residues coordinate Mn(2+): Asp-90, Gly-91, and Asp-235.

Belongs to the PP2C family. The cofactor is Mg(2+). It depends on Mn(2+) as a cofactor.

The enzyme catalyses O-phospho-L-seryl-[protein] + H2O = L-seryl-[protein] + phosphate. The catalysed reaction is O-phospho-L-threonyl-[protein] + H2O = L-threonyl-[protein] + phosphate. The polypeptide is Protein phosphatase PTC7 homolog fig (Drosophila erecta (Fruit fly)).